Here is a 24-residue protein sequence, read N- to C-terminus: Brevinin-1CSa (24 aa).

Cysteine 18 and cysteine 24 are oxidised to a cystine.

Expressed by the skin glands.

The protein localises to the secreted. The protein resides in the target cell membrane. In terms of biological role, antibacterial peptide. Has activity against the Gram-positive bacterium S.aureus (MIC=2 uM) and the Gram-negative bacterium E.coli (MIC=32 uM). Has a strong hemolytic activity (LC(50)=5 uM). The sequence is that of Brevinin-1CSa from Rana cascadae (Cascades frog).